We begin with the raw amino-acid sequence, 300 residues long: N-acetylmuramic acid 6-phosphate etherase (300 aa).

An SIS domain is found at 57–220 (ITHAFAHGGR…TSGAMIRSGK (164 aa)). Glutamate 85 functions as the Proton donor in the catalytic mechanism. Residue glutamate 116 is part of the active site.

This sequence belongs to the GCKR-like family. MurNAc-6-P etherase subfamily. As to quaternary structure, homodimer.

It carries out the reaction N-acetyl-D-muramate 6-phosphate + H2O = N-acetyl-D-glucosamine 6-phosphate + (R)-lactate. The protein operates within amino-sugar metabolism; 1,6-anhydro-N-acetylmuramate degradation. Its pathway is amino-sugar metabolism; N-acetylmuramate degradation. It participates in cell wall biogenesis; peptidoglycan recycling. Functionally, specifically catalyzes the cleavage of the D-lactyl ether substituent of MurNAc 6-phosphate, producing GlcNAc 6-phosphate and D-lactate. Together with AnmK, is also required for the utilization of anhydro-N-acetylmuramic acid (anhMurNAc) either imported from the medium or derived from its own cell wall murein, and thus plays a role in cell wall recycling. The chain is N-acetylmuramic acid 6-phosphate etherase from Vibrio vulnificus (strain CMCP6).